Here is a 638-residue protein sequence, read N- to C-terminus: Bifunctional protein glk (638 aa).

The disordered stretch occupies residues 1 to 20 (MSTGVQTKAAPGAGQHADGP). The tract at residues 1-341 (MSTGVQTKAA…QLSNRAGGSS (341 aa)) is glucokinase. Residue 24–29 (ADIGGT) participates in ATP binding. In terms of domain architecture, HTH rpiR-type spans 342-418 (SAVFERIRQM…LKLATGLTGT (77 aa)). Residues 342–638 (SAVFERIRQM…SHGAASSARD (297 aa)) are putative HTH-type transcriptional regulator. The H-T-H motif DNA-binding region spans 378 to 397 (IVDIARKADVSQPTVIRFCR). The SIS domain maps to 462-601 (AIDLLNGARR…AVGVAIRRAV (140 aa)).

In the N-terminal section; belongs to the bacterial glucokinase family.

It localises to the cytoplasm. It carries out the reaction D-glucose + ATP = D-glucose 6-phosphate + ADP + H(+). This chain is Bifunctional protein glk (glk), found in Paraburkholderia xenovorans (strain LB400).